Reading from the N-terminus, the 418-residue chain is CinA-like protein (418 aa).

It belongs to the CinA family.

This is CinA-like protein from Leptospira borgpetersenii serovar Hardjo-bovis (strain L550).